The primary structure comprises 282 residues: UDP-3-O-acyl-N-acetylglucosamine deacetylase (282 aa).

His74, His226, and Asp230 together coordinate Zn(2+). His253 serves as the catalytic Proton donor.

This sequence belongs to the LpxC family. Requires Zn(2+) as cofactor.

It carries out the reaction a UDP-3-O-[(3R)-3-hydroxyacyl]-N-acetyl-alpha-D-glucosamine + H2O = a UDP-3-O-[(3R)-3-hydroxyacyl]-alpha-D-glucosamine + acetate. The protein operates within glycolipid biosynthesis; lipid IV(A) biosynthesis; lipid IV(A) from (3R)-3-hydroxytetradecanoyl-[acyl-carrier-protein] and UDP-N-acetyl-alpha-D-glucosamine: step 2/6. Catalyzes the hydrolysis of UDP-3-O-myristoyl-N-acetylglucosamine to form UDP-3-O-myristoylglucosamine and acetate, the committed step in lipid A biosynthesis. In Aquifex aeolicus (strain VF5), this protein is UDP-3-O-acyl-N-acetylglucosamine deacetylase.